The chain runs to 421 residues: Histidine--tRNA ligase (421 aa).

It belongs to the class-II aminoacyl-tRNA synthetase family. In terms of assembly, homodimer.

The protein localises to the cytoplasm. It catalyses the reaction tRNA(His) + L-histidine + ATP = L-histidyl-tRNA(His) + AMP + diphosphate + H(+). In Fervidobacterium nodosum (strain ATCC 35602 / DSM 5306 / Rt17-B1), this protein is Histidine--tRNA ligase.